The primary structure comprises 383 residues: Creatine kinase, testis isozyme (383 aa).

In terms of domain architecture, Phosphagen kinase N-terminal spans 14–100 (KRLSPEEEFP…LDPIIEDRHG (87 aa)). The segment covering 99–112 (HGGYKPTDKHKTDL) has biased composition (basic and acidic residues). Residues 99 to 119 (HGGYKPTDKHKTDLNPDNLKG) form a disordered region. Residues 127–369 (YVISSRVRTG…KLLVEMEKKL (243 aa)) enclose the Phosphagen kinase C-terminal domain. ATP contacts are provided by residues 130-134 (SSRVR), H193, R238, R294, 322-327 (RGTGGV), and D337.

This sequence belongs to the ATP:guanido phosphotransferase family. As to expression, exists in many tissues, but preferentially in testis.

It carries out the reaction creatine + ATP = N-phosphocreatine + ADP + H(+). Its function is as follows. Reversibly catalyzes the transfer of phosphate between ATP and various phosphogens (e.g. creatine phosphate). Creatine kinase isoenzymes play a central role in energy transduction in tissues with large, fluctuating energy demands, such as skeletal muscle, heart, brain and spermatozoa. The sequence is that of Creatine kinase, testis isozyme (tck1) from Oncorhynchus mykiss (Rainbow trout).